A 381-amino-acid polypeptide reads, in one-letter code: Malonyl-CoA-acyl carrier protein transacylase, mitochondrial (381 aa).

Catalysis depends on residues Ser151 and His268. Lys312 is modified (N6-succinyllysine).

The protein belongs to the type II malonyltransferase family. As to expression, expressed in retinal ganglion cells.

The protein resides in the mitochondrion. The enzyme catalyses holo-[ACP] + malonyl-CoA = malonyl-[ACP] + CoA. It functions in the pathway lipid metabolism; fatty acid biosynthesis. Catalyzes the transfer of a malonyl moiety from malonyl-CoA to the free thiol group of the phosphopantetheine arm of the mitochondrial ACP protein (NDUFAB1). This suggests the existence of the biosynthesis of fatty acids in mitochondria. In Mus musculus (Mouse), this protein is Malonyl-CoA-acyl carrier protein transacylase, mitochondrial.